An 816-amino-acid polypeptide reads, in one-letter code: Sucrose synthase 2 (816 aa).

Position 15 is a phosphoserine (S15). The segment at 280–757 (MVFNVVILSP…GLQRIEEKYT (478 aa)) is GT-B glycosyltransferase.

It belongs to the glycosyltransferase 1 family. Plant sucrose synthase subfamily.

The catalysed reaction is an NDP-alpha-D-glucose + D-fructose = a ribonucleoside 5'-diphosphate + sucrose + H(+). Sucrose-cleaving enzyme that provides UDP-glucose and fructose for various metabolic pathways. The sequence is that of Sucrose synthase 2 (SUS1) from Zea mays (Maize).